The primary structure comprises 421 residues: AP-3 complex subunit mu (421 aa).

In terms of domain architecture, MHD spans 178–420; the sequence is QNKIFFDIIE…TTKAGKFQVR (243 aa).

It belongs to the adaptor complexes medium subunit family. Adaptor protein complex 3 (AP-3) is a heterotetramer composed of two large adaptins (delta-type subunit and beta-type subunit), a medium adaptin (mu-type subunit) and a small adaptin (sigma-type subunit).

The protein resides in the endosome membrane. Functionally, part of the AP-3 complex, an adaptor-related complex which is essential for the compartmentalization of the endocytic pathway. The chain is AP-3 complex subunit mu (apm3) from Dictyostelium discoideum (Social amoeba).